Consider the following 125-residue polypeptide: Large ribosomal subunit protein bL19 (125 aa).

The protein belongs to the bacterial ribosomal protein bL19 family.

Functionally, this protein is located at the 30S-50S ribosomal subunit interface and may play a role in the structure and function of the aminoacyl-tRNA binding site. The chain is Large ribosomal subunit protein bL19 from Ehrlichia ruminantium (strain Gardel).